We begin with the raw amino-acid sequence, 124 residues long: Small ribosomal subunit protein eS25 (124 aa).

The span at 1–22 (MPPKDSKQKKDAGKSKKDKDPV) shows a compositional bias: basic and acidic residues. Positions 1-37 (MPPKDSKQKKDAGKSKKDKDPVNKSGGKAKKKKWSKG) are disordered. Residues 27-37 (GKAKKKKWSKG) show a composition bias toward basic residues.

The protein belongs to the eukaryotic ribosomal protein eS25 family. As to quaternary structure, component of the small ribosomal subunit.

It localises to the cytoplasm. In terms of biological role, component of the small ribosomal subunit. The ribosome is a large ribonucleoprotein complex responsible for the synthesis of proteins in the cell. This is Small ribosomal subunit protein eS25 (rps25) from Danio rerio (Zebrafish).